The primary structure comprises 339 residues: Protein H339R (339 aa).

The protein belongs to the asfivirus H339R family. In terms of assembly, interacts with host NACA (alpha chain of nascent polypeptide-associated complex).

It localises to the host cytoplasm. The protein resides in the host nucleus. This is Protein H339R from African swine fever virus (isolate Tick/South Africa/Pretoriuskop Pr4/1996) (ASFV).